The following is a 310-amino-acid chain: Oxygen-dependent coproporphyrinogen-III oxidase (310 aa).

A substrate-binding site is contributed by Ser-93. Residues His-97 and His-107 each contribute to the a divalent metal cation site. His-107 functions as the Proton donor in the catalytic mechanism. Residue 109 to 111 coordinates substrate; the sequence is NVR. A divalent metal cation contacts are provided by His-146 and His-176. The interval 241-276 is important for dimerization; that stretch reads YVEFNLVYDRGTLFGLQSGGRTESILMSLPPQVRWS. 259 to 261 contributes to the substrate binding site; it reads GGR.

Belongs to the aerobic coproporphyrinogen-III oxidase family. As to quaternary structure, homodimer. A divalent metal cation serves as cofactor.

Its subcellular location is the cytoplasm. It carries out the reaction coproporphyrinogen III + O2 + 2 H(+) = protoporphyrinogen IX + 2 CO2 + 2 H2O. Its pathway is porphyrin-containing compound metabolism; protoporphyrin-IX biosynthesis; protoporphyrinogen-IX from coproporphyrinogen-III (O2 route): step 1/1. Its function is as follows. Involved in the heme biosynthesis. Catalyzes the aerobic oxidative decarboxylation of propionate groups of rings A and B of coproporphyrinogen-III to yield the vinyl groups in protoporphyrinogen-IX. This Pseudomonas fluorescens (strain SBW25) protein is Oxygen-dependent coproporphyrinogen-III oxidase.